We begin with the raw amino-acid sequence, 201 residues long: MKKVLLTVCAIALFGSQAAWADARQDLQQRLNKVNSFQANFSQTVTSNEGALIQKGEGHLKVQRPDLFNWQMTAPDESTLISDGKTLWFYNPFVEQVTATWLESATTNTPFMLIARNDSKEWQNYDVKQNGDRFELTPKTENNLKHFSITVSPNGQIQQFAATEQDGQVSQYQLTAQKVAPIDASAFRFTPPAGVTVDDQR.

The signal sequence occupies residues 1-21 (MKKVLLTVCAIALFGSQAAWA).

Belongs to the LolA family. Monomer.

The protein resides in the periplasm. Functionally, participates in the translocation of lipoproteins from the inner membrane to the outer membrane. Only forms a complex with a lipoprotein if the residue after the N-terminal Cys is not an aspartate (The Asp acts as a targeting signal to indicate that the lipoprotein should stay in the inner membrane). In Proteus mirabilis (strain HI4320), this protein is Outer-membrane lipoprotein carrier protein.